The chain runs to 271 residues: NADPH-dependent 7-cyano-7-deazaguanine reductase (271 aa).

81–83 is a binding site for substrate; sequence IES. Residue 83–84 coordinates NADPH; that stretch reads SK. Cysteine 177 (thioimide intermediate) is an active-site residue. Aspartate 184 acts as the Proton donor in catalysis. Position 216–217 (216–217) interacts with substrate; that stretch reads HE. 245–246 contributes to the NADPH binding site; sequence RG.

Belongs to the GTP cyclohydrolase I family. QueF type 2 subfamily. In terms of assembly, homodimer.

It is found in the cytoplasm. It catalyses the reaction 7-aminomethyl-7-carbaguanine + 2 NADP(+) = 7-cyano-7-deazaguanine + 2 NADPH + 3 H(+). The protein operates within tRNA modification; tRNA-queuosine biosynthesis. Functionally, catalyzes the NADPH-dependent reduction of 7-cyano-7-deazaguanine (preQ0) to 7-aminomethyl-7-deazaguanine (preQ1). The chain is NADPH-dependent 7-cyano-7-deazaguanine reductase from Xanthomonas campestris pv. campestris (strain 8004).